The sequence spans 239 residues: Geranylgeranylglyceryl phosphate synthase (239 aa).

Mg(2+) is bound by residues D18 and S45. Sn-glycerol 1-phosphate contacts are provided by residues 166–172, 197–198, and 219–220; these read YLEAGSG, GG, and GT.

This sequence belongs to the GGGP/HepGP synthase family. Group II subfamily. Requires Mg(2+) as cofactor.

Its subcellular location is the cytoplasm. The enzyme catalyses sn-glycerol 1-phosphate + (2E,6E,10E)-geranylgeranyl diphosphate = sn-3-O-(geranylgeranyl)glycerol 1-phosphate + diphosphate. The protein operates within membrane lipid metabolism; glycerophospholipid metabolism. Its function is as follows. Prenyltransferase that catalyzes the transfer of the geranylgeranyl moiety of geranylgeranyl diphosphate (GGPP) to the C3 hydroxyl of sn-glycerol-1-phosphate (G1P). This reaction is the first ether-bond-formation step in the biosynthesis of archaeal membrane lipids. The sequence is that of Geranylgeranylglyceryl phosphate synthase from Pyrobaculum arsenaticum (strain DSM 13514 / JCM 11321 / PZ6).